Consider the following 678-residue polypeptide: NADPH--cytochrome P450 reductase (678 aa).

G2 bears the N-acetylglycine mark. The Lumenal segment spans residues 2 to 22; the sequence is GDSHEDTSATMPEAVAEEVSL. A helical membrane pass occupies residues 23–43; it reads FSTTDMVLFSLIVGVLTYWFI. The Cytoplasmic segment spans residues 44–678; that stretch reads FRKKKEEIPE…KGRYSLDVWS (635 aa). Residues 80–224 form the Flavodoxin-like domain; the sequence is IIVFYGSQTG…DFITWREQFW (145 aa). Residues 86 to 91, 138 to 141, 173 to 182, and D208 each bind FMN; these read SQTGTA, ATYG, and LGNKTYEHFN. The FAD-binding FR-type domain occupies 279–521; the sequence is KNPFLAAVTA…FVRKSQFRLP (243 aa). NADP(+) is bound at residue R298. FAD contacts are provided by residues R424, 454-457, 472-474, Y478, and 488-491; these read RYYS, CAV, and GVAT. NADP(+)-binding positions include T535, 596 to 597, 602 to 606, and D639; these read SR and KVYVQ. W677 serves as a coordination point for FAD.

Belongs to the NADPH--cytochrome P450 reductase family. The protein in the N-terminal section; belongs to the flavodoxin family. This sequence in the C-terminal section; belongs to the flavoprotein pyridine nucleotide cytochrome reductase family. FAD serves as cofactor. The cofactor is FMN.

Its subcellular location is the endoplasmic reticulum membrane. The enzyme catalyses 2 oxidized [cytochrome P450] + NADPH = 2 reduced [cytochrome P450] + NADP(+) + H(+). Functionally, this enzyme is required for electron transfer from NADP to cytochrome P450 in microsomes. It can also provide electron transfer to heme oxygenase and cytochrome B5. In Rattus norvegicus (Rat), this protein is NADPH--cytochrome P450 reductase.